A 706-amino-acid chain; its full sequence is MPQDRFVASDSIASRVQQLVDEINRHNRLYYDDAAPEITDLQYDQLLAELTQLENDHPDLRRPDSPTQLVGGDVVDQLVQVPHRVPMLSIDNTYSREELAAAMERIEKSLEGESVAWTMEYKIDGVAGSIRYENGELTLALTRGNGQVGDDITHNVRTIRELPRSIADAALAHPEVAGGNVPEVLEVRGELYMTDADLADLNVRQTDAGHEPFKNTRNVTAGTIRLLDPKIAASRNIRFFCHGSGELVGVRASDHMTFLQHVQALGIPIAPDVVRFENKEDALQAIAKLELEMPDLPFEIDGIVFKVDSFEQREKLGVRSKSPRWVIAYKFERYEAITTLEAIDVQVGKTGTITPVAYLTPVDIADTTVSRASLHNADEIERLDVRVGDTVVVEKAGKIIPKVVRVEKHARTKPLPKFEFPTHCPQCDEVLTRDEGGVYIRCTNPACPAQLRQRLVYFGSRTGMDIDGLGEEVVDLLLQKELVENYADLYRLNVDELAELTWPRLRKGKGDEMIEVQFGRKNAESLVAGINESRTRGLARVLSSISIRHIGPRVAKLITAKFWNLDLLRSAKAEDLAAIHEIGDRIAESLVKFIHSESGSQTLSDLDAVGVTMSETEPVATPDEEANLPLAGKNIVATGTLQHYTRDEIKARIEELGGRAASSVSKKTDFLIAGEKAGSKLTKAESLGVEVLSEDDFRLRYETEAT.

NAD(+)-binding positions include 40–44 (DLQYD), 89–90 (SI), and Glu-120. The N6-AMP-lysine intermediate role is filled by Lys-122. NAD(+)-binding residues include Arg-143, Glu-190, Lys-306, and Lys-330. 4 residues coordinate Zn(2+): Cys-424, Cys-427, Cys-442, and Cys-447. The 82-residue stretch at 625–706 (EANLPLAGKN…FRLRYETEAT (82 aa)) folds into the BRCT domain.

Belongs to the NAD-dependent DNA ligase family. LigA subfamily. Requires Mg(2+) as cofactor. The cofactor is Mn(2+).

It carries out the reaction NAD(+) + (deoxyribonucleotide)n-3'-hydroxyl + 5'-phospho-(deoxyribonucleotide)m = (deoxyribonucleotide)n+m + AMP + beta-nicotinamide D-nucleotide.. In terms of biological role, DNA ligase that catalyzes the formation of phosphodiester linkages between 5'-phosphoryl and 3'-hydroxyl groups in double-stranded DNA using NAD as a coenzyme and as the energy source for the reaction. It is essential for DNA replication and repair of damaged DNA. The polypeptide is DNA ligase (Rhodopirellula baltica (strain DSM 10527 / NCIMB 13988 / SH1)).